A 306-amino-acid chain; its full sequence is Aspartate carbamoyltransferase catalytic subunit (306 aa).

Residues arginine 56 and threonine 57 each contribute to the carbamoyl phosphate site. L-aspartate is bound at residue lysine 84. Residues arginine 106, histidine 134, and glutamine 137 each coordinate carbamoyl phosphate. L-aspartate contacts are provided by arginine 167 and arginine 221. Carbamoyl phosphate-binding residues include glycine 262 and proline 263.

Belongs to the aspartate/ornithine carbamoyltransferase superfamily. ATCase family. As to quaternary structure, heterododecamer (2C3:3R2) of six catalytic PyrB chains organized as two trimers (C3), and six regulatory PyrI chains organized as three dimers (R2).

It catalyses the reaction carbamoyl phosphate + L-aspartate = N-carbamoyl-L-aspartate + phosphate + H(+). Its pathway is pyrimidine metabolism; UMP biosynthesis via de novo pathway; (S)-dihydroorotate from bicarbonate: step 2/3. Catalyzes the condensation of carbamoyl phosphate and aspartate to form carbamoyl aspartate and inorganic phosphate, the committed step in the de novo pyrimidine nucleotide biosynthesis pathway. The protein is Aspartate carbamoyltransferase catalytic subunit of Desulforudis audaxviator (strain MP104C).